A 661-amino-acid polypeptide reads, in one-letter code: Transketolase (661 aa).

H30 contributes to the substrate binding site. Thiamine diphosphate is bound by residues H70 and 118 to 120; that span reads GPL. The segment at 99–118 is disordered; it reads STTPGHPEFRDTPGVEATTG. D159 serves as a coordination point for Mg(2+). G160 and N189 together coordinate thiamine diphosphate. The Mg(2+) site is built by N189 and V191. The substrate site is built by H266, R357, and S384. H266 contacts thiamine diphosphate. The active-site Proton donor is E411. A thiamine diphosphate-binding site is contributed by F437. The substrate site is built by H461, D469, and R520.

This sequence belongs to the transketolase family. As to quaternary structure, homodimer. It depends on Mg(2+) as a cofactor. Requires Ca(2+) as cofactor. Mn(2+) is required as a cofactor. Co(2+) serves as cofactor. The cofactor is thiamine diphosphate.

It catalyses the reaction D-sedoheptulose 7-phosphate + D-glyceraldehyde 3-phosphate = aldehydo-D-ribose 5-phosphate + D-xylulose 5-phosphate. Its function is as follows. Catalyzes the transfer of a two-carbon ketol group from a ketose donor to an aldose acceptor, via a covalent intermediate with the cofactor thiamine pyrophosphate. This is Transketolase (tkt) from Physarum polycephalum (Slime mold).